The sequence spans 426 residues: Potassium channel subfamily K member 2 (426 aa).

Topologically, residues 1 to 61 (MLASASRERP…SAINVMKWKT (61 aa)) are cytoplasmic. Important for GNG4 binding and L-glutamate release in astrocytes regions lie at residues 17–38 (AAPD…LSFS) and 51–61 (DSAINVMKWKT). The helical transmembrane segment at 62 to 82 (VSTIFLVVVLYLIIGATVFKA) threads the bilayer. N-linked (GlcNAc...) asparagine glycosylation is found at Asn110 and Asn134. An intramembrane region (pore-forming) is located at residues 144–170 (LGSSFFFAGTVITTIGFGNISPRTEGG). K(+) contacts are provided by Thr157, Ile158, Gly159, and Phe160. Positions 157–162 (TIGFGN) are selectivity filter 1. A helical transmembrane segment spans residues 172-192 (IFCIIYALLGIPLFGFLLAGV). At 193 to 222 (GDQLGTIFGKGIAKVEDTFIKWNVSQTKIR) the chain is on the cytoplasmic side. Residues 223-243 (IISTIIFILFGCVLFVALPAV) traverse the membrane as a helical segment. An intramembrane region (pore-forming) is located at residues 253-283 (ALDAIYFVVITLTTIGFGDYVAGGSDIEYLD). Positions 266, 267, 268, and 269 each coordinate K(+). The segment at 266-271 (TIGFGD) is selectivity filter 2. Residues 288–308 (VVWFWILVGLAYFAAVLSMIG) traverse the membrane as a helical segment. Residues 309 to 426 (DWLRVISKKT…EDIAVIENMK (118 aa)) are Cytoplasmic-facing. Residues 313 to 326 (VISKKTKEEVGEFR) are interaction with AKAP5. Residues 337 to 385 (TAEFKETRRRLSVEIYDKFQRATSVKRKLSAELAGNHNQELTPCRRTLS) are essential for chloroform and halothane sensitivity. Phosphoserine; by PKA is present on Ser348.

Belongs to the two pore domain potassium channel (TC 1.A.1.8) family. Homodimer; disulfide-linked. Forms heterodimers with other 2-pore domain K(+) channel subunits, such as KCNK1, KCNK4, KCNK10 and KCNK18. Interacts with AKAP5; the channel is recruited to postsynaptic microdomains by AKAP5 where it can integrate neurotransmitter receptor signals. Part of a complex composed of AKAP5 and ADRB2. Upon AKAP5 binding, the channel is no longer sensitive to intracellular acidification, membrane stretch or arachidonic acid stimuli. Interacts with POPDC1; the interaction enhances KCNK2 surface expression and is inhibited by cAMP. Interacts (via N-terminus) with G-protein subunit GNG4 (via C-terminus); this interaction confers ion selectivity to L-glutamate and Cl(-) anions. Post-translationally, phosphorylation at Ser-348 controls the reversible conversion from a leak channel to a voltage-dependent channel. Expressed in cardiomyocytes (at protein level). Expressed in various brain regions including the lateral olfactory tract, piriform cortex of the forebrain, paraventricular and anteromedial thalamic nuclei, brainstem, caudate putamen, nucleus accumbens, neocortex and interpeduncular nucleus. Detected in astrocytes in hippocampus stratum radiatum. As to expression, expressed in brain and kidney.

Its subcellular location is the cell membrane. It is found in the endoplasmic reticulum membrane. The protein localises to the cell projection. The protein resides in the axon. It localises to the dendrite. Its subcellular location is the postsynaptic density membrane. It is found in the sarcolemma. The catalysed reaction is K(+)(in) = K(+)(out). The enzyme catalyses L-glutamate(out) = L-glutamate(in). It carries out the reaction chloride(in) = chloride(out). It catalyses the reaction Rb(+)(in) = Rb(+)(out). The catalysed reaction is Cs(+)(in) = Cs(+)(out). With respect to regulation, activated by various stimuli including intracellular acidic pH, mechanical stretch and polyunsaturated fatty acids such as arachidonic acid. In terms of biological role, k(+) channel that conducts voltage-dependent outward rectifying currents upon membrane depolarization. Voltage sensing is coupled to K(+) electrochemical gradient in an 'ion flux gating' mode where outward but not inward ion flow opens the gate. Converts to voltage-independent 'leak' conductance mode upon stimulation by various stimuli including mechanical membrane stretch, acidic pH, heat and lipids. Reversibly converts between a voltage-insensitive K(+) 'leak' channel and a voltage-dependent outward rectifying K(+) channel in a phosphorylation-dependent manner. Homo- and heterodimerizes to form functional channels with distinct regulatory and gating properties. In trigeminal ganglia sensory neurons, the heterodimer of KCNK2/TREK-1 and KCNK18/TRESK inhibits neuronal firing and neurogenic inflammation by stabilizing the resting membrane potential at K(+) equilibrium potential as well as by regulating the threshold of action potentials and the spike frequency. At trigeminal A-beta afferent nerves, the heterodimer of KCNK2/TREK-1 and KCNK4/TRAAK is mostly coexpressed at nodes of Ranvier where it conducts voltage-independent mechanosensitive and thermosensitive currents, allowing rapid action potential repolarization, high speed and high frequence saltatory conduction on myelinated nerves to ensure prompt sensory responses. In hippocampal astrocytes, the heterodimer of KCNK2/TREK-1 and KCNK1/TWIK-1 allows passive K(+) conductance under basal conditions, but changes ion selectivity and becomes permeable to L-glutamate and Cl(-) ions upon binding to G-protein subunit GNG4 in stimulated astrocytes. Mediates rapid L-glutamate release in response to activation of G-protein-coupled receptors such as F2R and CNR1. In hippocampal pyramidal neurons, the homodimer of KCNK2/TREK-1 contributes to gamma-aminobutyric acid (GABA) B-induced slow inhibitory postsynaptic potential. Associates with AKAP5 and Gs-protein-coupled receptor B2AR at postsynaptic dense bodies and converts to a leak channel no longer sensitive to stimulation by arachidonic acid, acidic pH or mechanical stress, nor inhibited by Gq-coupled receptors but still under the negative control of Gs-coupled receptors. Permeable to other monovalent cations such as Rb(+) and Cs(+). Does not display channel activity but reduces the channel activity of isoform 1, isoform 2 and isoform 4 and reduces cell surface expression of isoform 2. In Rattus norvegicus (Rat), this protein is Potassium channel subfamily K member 2.